Here is a 191-residue protein sequence, read N- to C-terminus: Putative NADH dehydrogenase/NAD(P)H nitroreductase (191 aa).

127 to 132 (AAHSLG) is a binding site for NAD(+).

Belongs to the nitroreductase family. FMN serves as cofactor.

This chain is Putative NADH dehydrogenase/NAD(P)H nitroreductase, found in Methanothermobacter thermautotrophicus (strain ATCC 29096 / DSM 1053 / JCM 10044 / NBRC 100330 / Delta H) (Methanobacterium thermoautotrophicum).